A 325-amino-acid chain; its full sequence is uncharacterized protein (325 aa).

This sequence belongs to the mgp1/MG371 family.

This is an uncharacterized protein from Mycoplasma pneumoniae (strain ATCC 29342 / M129 / Subtype 1) (Mycoplasmoides pneumoniae).